A 681-amino-acid chain; its full sequence is Methionine--tRNA ligase (681 aa).

A 'HIGH' region motif is present at residues 18–28; that stretch reads PYANGSIHLGH. Positions 149, 152, 162, and 165 each coordinate Zn(2+). Residues 334 to 338 carry the 'KMSKS' region motif; it reads KMSKS. Lys337 serves as a coordination point for ATP. The region spanning 580-681 is the tRNA-binding domain; it reads DFAKLDLRIV…NGAEPGQRVS (102 aa).

This sequence belongs to the class-I aminoacyl-tRNA synthetase family. MetG type 1 subfamily. As to quaternary structure, homodimer. Zn(2+) is required as a cofactor.

It is found in the cytoplasm. The enzyme catalyses tRNA(Met) + L-methionine + ATP = L-methionyl-tRNA(Met) + AMP + diphosphate. In terms of biological role, is required not only for elongation of protein synthesis but also for the initiation of all mRNA translation through initiator tRNA(fMet) aminoacylation. The protein is Methionine--tRNA ligase of Chromohalobacter salexigens (strain ATCC BAA-138 / DSM 3043 / CIP 106854 / NCIMB 13768 / 1H11).